We begin with the raw amino-acid sequence, 557 residues long: Formate--tetrahydrofolate ligase (557 aa).

Residue 66-73 (TPAGEGKS) coordinates ATP.

It belongs to the formate--tetrahydrofolate ligase family.

It catalyses the reaction (6S)-5,6,7,8-tetrahydrofolate + formate + ATP = (6R)-10-formyltetrahydrofolate + ADP + phosphate. It participates in one-carbon metabolism; tetrahydrofolate interconversion. The chain is Formate--tetrahydrofolate ligase from Clostridium botulinum (strain Loch Maree / Type A3).